We begin with the raw amino-acid sequence, 368 residues long: RNA polymerase sigma factor SigA (368 aa).

The segment covering 71–83 (NEKDSSDTDDKIN) has biased composition (basic and acidic residues). A disordered region spans residues 71–90 (NEKDSSDTDDKINPNDLSAP). Residues 135-205 (LAEANLRLVV…TRAIADQART (71 aa)) are sigma-70 factor domain-2. Positions 159 to 162 (DLIQ) match the Interaction with polymerase core subunit RpoC motif. The sigma-70 factor domain-3 stretch occupies residues 214-290 (ETINKLIRVQ…DQEAQSPSDH (77 aa)). The interval 303–356 (VLDTLTDREENVLRLRFGLDDGRTRTLEEVGKVFGVTRERIRQIEAKALRKLRH) is sigma-70 factor domain-4. The segment at residues 329–348 (LEEVGKVFGVTRERIRQIEA) is a DNA-binding region (H-T-H motif).

Belongs to the sigma-70 factor family. RpoD/SigA subfamily. In terms of assembly, interacts transiently with the RNA polymerase catalytic core.

It localises to the cytoplasm. In terms of biological role, sigma factors are initiation factors that promote the attachment of RNA polymerase to specific initiation sites and are then released. This sigma factor is the primary sigma factor during exponential growth. The sequence is that of RNA polymerase sigma factor SigA from Staphylococcus epidermidis (strain ATCC 35984 / DSM 28319 / BCRC 17069 / CCUG 31568 / BM 3577 / RP62A).